A 252-amino-acid chain; its full sequence is Trans-aconitate 2-methyltransferase (252 aa).

This sequence belongs to the methyltransferase superfamily. Tam family.

Its subcellular location is the cytoplasm. The catalysed reaction is trans-aconitate + S-adenosyl-L-methionine = (E)-3-(methoxycarbonyl)pent-2-enedioate + S-adenosyl-L-homocysteine. Catalyzes the S-adenosylmethionine monomethyl esterification of trans-aconitate. This chain is Trans-aconitate 2-methyltransferase, found in Escherichia coli O17:K52:H18 (strain UMN026 / ExPEC).